Consider the following 290-residue polypeptide: MQGKIIKSLAGFYYVESEGQVYQTRARGNFRKRGETPYVGDIVDFSAEDNSEGYILAIHPRKNSLVRPPIVNIDQAVVIMSAKEPEFNSNLLDRFLILLEHKAIHPVVYISKMDLLDSPEEIKAIGRQYQAIGYNFVTSLEELLPLLADKITVFMGQTGVGKSTLLNRIAPELALETGEISDSLGRGRHTTRAVSFYNTHGGKIADTPGFSSLDYDIANAEDLNEAFPELRRLSHKCKFRSCTHTHEPKCAVKAALETGELWPVRYEHYLQFLSEIENRRETYKKVIKRK.

Residues 62 to 213 (KNSLVRPPIV…IADTPGFSSL (152 aa)) form the CP-type G domain. Residues 111 to 114 (SKMD) and 156 to 164 (GQTGVGKST) contribute to the GTP site. Zn(2+)-binding residues include cysteine 237, cysteine 242, histidine 244, and cysteine 250.

Belongs to the TRAFAC class YlqF/YawG GTPase family. RsgA subfamily. As to quaternary structure, monomer. Associates with 30S ribosomal subunit, binds 16S rRNA. The cofactor is Zn(2+).

The protein resides in the cytoplasm. Functionally, one of several proteins that assist in the late maturation steps of the functional core of the 30S ribosomal subunit. Helps release RbfA from mature subunits. May play a role in the assembly of ribosomal proteins into the subunit. Circularly permuted GTPase that catalyzes slow GTP hydrolysis, GTPase activity is stimulated by the 30S ribosomal subunit. The sequence is that of Small ribosomal subunit biogenesis GTPase RsgA from Streptococcus pyogenes serotype M6 (strain ATCC BAA-946 / MGAS10394).